The primary structure comprises 246 residues: Large ribosomal subunit protein uL3 (246 aa).

Q151 is subject to N5-methylglutamine.

The protein belongs to the universal ribosomal protein uL3 family. As to quaternary structure, part of the 50S ribosomal subunit. Forms a cluster with proteins L14 and L19. Methylated by PrmB.

Functionally, one of the primary rRNA binding proteins, it binds directly near the 3'-end of the 23S rRNA, where it nucleates assembly of the 50S subunit. The chain is Large ribosomal subunit protein uL3 from Bartonella quintana (strain Toulouse) (Rochalimaea quintana).